The following is a 482-amino-acid chain: Ribulose bisphosphate carboxylase large chain (482 aa).

A propeptide spanning residues 1-2 (MS) is cleaved from the precursor. P3 carries the post-translational modification N-acetylproline. The residue at position 14 (K14) is an N6,N6,N6-trimethyllysine. Substrate-binding residues include N123 and T173. The active-site Proton acceptor is K175. Substrate is bound at residue K177. Mg(2+) contacts are provided by K201, D203, and E204. Residue K201 is modified to N6-carboxylysine. The Proton acceptor role is filled by H294. 3 residues coordinate substrate: R295, H327, and S379.

Belongs to the RuBisCO large chain family. Type I subfamily. As to quaternary structure, heterohexadecamer of 8 large chains and 8 small chains; disulfide-linked. The disulfide link is formed within the large subunit homodimers. The cofactor is Mg(2+). Post-translationally, the disulfide bond which can form in the large chain dimeric partners within the hexadecamer appears to be associated with oxidative stress and protein turnover.

The protein localises to the plastid. It is found in the chloroplast. The enzyme catalyses 2 (2R)-3-phosphoglycerate + 2 H(+) = D-ribulose 1,5-bisphosphate + CO2 + H2O. It catalyses the reaction D-ribulose 1,5-bisphosphate + O2 = 2-phosphoglycolate + (2R)-3-phosphoglycerate + 2 H(+). Functionally, ruBisCO catalyzes two reactions: the carboxylation of D-ribulose 1,5-bisphosphate, the primary event in carbon dioxide fixation, as well as the oxidative fragmentation of the pentose substrate in the photorespiration process. Both reactions occur simultaneously and in competition at the same active site. In Stegnosperma halimifolium, this protein is Ribulose bisphosphate carboxylase large chain.